The chain runs to 249 residues: Bacillaene synthase decarboxylase PksI (249 aa).

The active site involves His-230.

It belongs to the enoyl-CoA hydratase/isomerase family. As to quaternary structure, homotrimer. Does not form a heterotrimeric complex with PksH.

The protein resides in the cytoplasm. Its pathway is antibiotic biosynthesis; bacillaene biosynthesis. In terms of biological role, involved in some intermediate steps for the synthesis of the antibiotic polyketide bacillaene which is involved in secondary metabolism. Catalyzes the decarboxylation of the 3-methylglutaconyl group tethered to PksL to a 3-methylcrotonyl moiety. The sequence is that of Bacillaene synthase decarboxylase PksI (pksI) from Bacillus subtilis (strain 168).